Here is a 953-residue protein sequence, read N- to C-terminus: Probable LRR receptor-like serine/threonine-protein kinase At1g53420 (953 aa).

The first 22 residues, 1–22 (MSLNRFLFTSFSFFLFFIVHFA), serve as a signal peptide directing secretion. At 23-566 (SSATLPTQEG…SPRNGMSTGT (544 aa)) the chain is on the extracellular side. LRR repeat units follow at residues 63–86 (WSTI…LVGL), 88–110 (LLQE…WGVL), 111–132 (PLVN…EFGN), 135–158 (TLTS…GNLP), 159–182 (NIQQ…AKLT), and 183–205 (TLRD…IQKW). Asparagine 100 and asparagine 132 each carry an N-linked (GlcNAc...) asparagine glycan. N-linked (GlcNAc...) asparagine glycans are attached at residues asparagine 265, asparagine 315, asparagine 335, asparagine 378, and asparagine 423. A helical transmembrane segment spans residues 567–587 (LHTLVVILSIFIVFLVFGTLW). The Cytoplasmic segment spans residues 588 to 953 (KKGYLRSKSQ…SDRSESSADH (366 aa)). One can recognise a Protein kinase domain in the interval 624–901 (FDSANRIGEG…VKMLEGKKMV (278 aa)). Residues 630–638 (IGEGGFGPV) and lysine 652 each bind ATP. Tyrosine 697 carries the phosphotyrosine modification. Aspartate 750 (proton acceptor) is an active-site residue. A Phosphoserine modification is found at serine 783. A phosphothreonine mark is found at threonine 784 and threonine 789. A Phosphotyrosine modification is found at tyrosine 797.

The protein belongs to the protein kinase superfamily. Ser/Thr protein kinase family.

It is found in the membrane. The catalysed reaction is L-seryl-[protein] + ATP = O-phospho-L-seryl-[protein] + ADP + H(+). The enzyme catalyses L-threonyl-[protein] + ATP = O-phospho-L-threonyl-[protein] + ADP + H(+). The chain is Probable LRR receptor-like serine/threonine-protein kinase At1g53420 from Arabidopsis thaliana (Mouse-ear cress).